Reading from the N-terminus, the 516-residue chain is (R)-citramalate synthase CimA (516 aa).

Positions 8–269 (LEILDVTLRD…KTNINEIAIT (262 aa)) constitute a Pyruvate carboxyltransferase domain. Residue arginine 16 is the Proton donor of the active site. Pyruvate contacts are provided by residues 16–17 (RD) and tyrosine 144. Aspartate 17 provides a ligand contact to Mn(2+). Glutamate 146 acts as the Proton acceptor in catalysis. Residue threonine 179 coordinates pyruvate. Residues histidine 207 and histidine 209 each contribute to the Mn(2+) site.

Belongs to the alpha-IPM synthase/homocitrate synthase family. Homodimer. The cofactor is Mn(2+).

The catalysed reaction is pyruvate + acetyl-CoA + H2O = (3R)-citramalate + CoA + H(+). Its pathway is amino-acid biosynthesis; L-isoleucine biosynthesis; 2-oxobutanoate from pyruvate: step 1/3. With respect to regulation, regulated by the end-product isoleucine via a feedback inhibition. The binding of isoleucine has inhibitory effects on the binding of both pyruvate and acetyl-CoA. May act via conformational change of the dimer interface of the regulatory domain, leading to inhibition of the catalytic reaction. Functionally, catalyzes the condensation of pyruvate and acetyl-coenzyme A to form (R)-citramalate. Shows strict substrate specificity for pyruvate. Cannot use alpha-ketoisovalerate, alpha-ketobutyrate, alpha-ketoisocaproate, alpha-ketoglutarate or glyoxylate. The chain is (R)-citramalate synthase CimA from Leptospira interrogans serogroup Icterohaemorrhagiae serovar Lai (strain 56601).